Here is a 396-residue protein sequence, read N- to C-terminus: Phosphoglycerate kinase (396 aa).

Residues 21-23, Arg36, 59-62, Arg119, and Arg156 each bind substrate; these read DFN and HLGK. ATP contacts are provided by residues Lys206, Glu325, and 352–355; that span reads GGDS.

Belongs to the phosphoglycerate kinase family. As to quaternary structure, monomer.

It localises to the cytoplasm. It carries out the reaction (2R)-3-phosphoglycerate + ATP = (2R)-3-phospho-glyceroyl phosphate + ADP. Its pathway is carbohydrate degradation; glycolysis; pyruvate from D-glyceraldehyde 3-phosphate: step 2/5. The chain is Phosphoglycerate kinase from Staphylococcus haemolyticus (strain JCSC1435).